The sequence spans 667 residues: UvrABC system protein B (667 aa).

In terms of domain architecture, Helicase ATP-binding spans 28-185 (NNFKQGLKEQ…NKLIELKYQR (158 aa)). 41 to 48 (GATGTGKT) contributes to the ATP binding site. The Beta-hairpin motif lies at 94–117 (YYDYYQPEAYVASSDTYIEKDSKI). The 163-residue stretch at 432 to 594 (QMDDLYFEIK…VTPTALNKTI (163 aa)) folds into the Helicase C-terminal domain. In terms of domain architecture, UVR spans 629-664 (NKEIKRLQKTMKEAAKALDFEKAATLRDLILDLEKK).

This sequence belongs to the UvrB family. Forms a heterotetramer with UvrA during the search for lesions. Interacts with UvrC in an incision complex.

The protein localises to the cytoplasm. Functionally, the UvrABC repair system catalyzes the recognition and processing of DNA lesions. A damage recognition complex composed of 2 UvrA and 2 UvrB subunits scans DNA for abnormalities. Upon binding of the UvrA(2)B(2) complex to a putative damaged site, the DNA wraps around one UvrB monomer. DNA wrap is dependent on ATP binding by UvrB and probably causes local melting of the DNA helix, facilitating insertion of UvrB beta-hairpin between the DNA strands. Then UvrB probes one DNA strand for the presence of a lesion. If a lesion is found the UvrA subunits dissociate and the UvrB-DNA preincision complex is formed. This complex is subsequently bound by UvrC and the second UvrB is released. If no lesion is found, the DNA wraps around the other UvrB subunit that will check the other stand for damage. The protein is UvrABC system protein B of Aster yellows witches'-broom phytoplasma (strain AYWB).